The chain runs to 115 residues: MNNITKLMKQKNILTPPLPLYRRVLRAHRYHLGAEERALGDEYVKAEFRRHRNVTNPLHLVGFLSSWERYADALENESWKQEKYSNTDLLESLNDQQIGQLYELSKALQEQKKSE.

The protein belongs to the complex I LYR family. SDHAF3 subfamily. As to quaternary structure, interacts with sdh2 within an sdh1-sdh2 subcomplex.

The protein localises to the mitochondrion matrix. Functionally, plays an essential role in the assembly of succinate dehydrogenase (SDH), an enzyme complex (also referred to as respiratory complex II) that is a component of both the tricarboxylic acid (TCA) cycle and the mitochondrial electron transport chain, and which couples the oxidation of succinate to fumarate with the reduction of ubiquinone (coenzyme Q) to ubiquinol. Promotes maturation of the iron-sulfur protein subunit sdh2 of the SDH catalytic dimer, protecting it from the deleterious effects of oxidants. May act together with SDHAF1. This chain is Succinate dehydrogenase assembly factor 3, mitochondrial, found in Schizosaccharomyces pombe (strain 972 / ATCC 24843) (Fission yeast).